The sequence spans 304 residues: Cell surface-binding protein OPG105 (304 aa).

The Alpha-carbonic anhydrase domain maps to 1–235 (MSQQLSPINI…NDDTEVYYSG (235 aa)). The Virion surface portion of the chain corresponds to 1–275 (MSQQLSPINI…YQKYIEGNKT (275 aa)). A helical transmembrane segment spans residues 276 to 294 (FAIIAIVFVYILTAILFLM). Residues 295-304 (SRRYSREKQN) lie on the Intravirion side of the membrane.

Belongs to the alpha-carbonic anhydrase family. As to quaternary structure, homodimer; disulfide-linked. Post-translationally, apparently non-glycosylated.

The protein resides in the virion membrane. Functionally, binds to chondroitin sulfate on the cell surface to provide virion attachment to target cell. This is Cell surface-binding protein OPG105 (OPG105) from Homo sapiens (Human).